Reading from the N-terminus, the 169-residue chain is Ribosomal RNA large subunit methyltransferase H (169 aa).

Residues Leu-85, Gly-117, and 136–141 (LGELTW) each bind S-adenosyl-L-methionine.

The protein belongs to the RNA methyltransferase RlmH family. In terms of assembly, homodimer.

It localises to the cytoplasm. It carries out the reaction pseudouridine(1915) in 23S rRNA + S-adenosyl-L-methionine = N(3)-methylpseudouridine(1915) in 23S rRNA + S-adenosyl-L-homocysteine + H(+). Functionally, specifically methylates the pseudouridine at position 1915 (m3Psi1915) in 23S rRNA. The chain is Ribosomal RNA large subunit methyltransferase H from Brucella abortus biovar 1 (strain 9-941).